A 1312-amino-acid chain; its full sequence is Cyclic GMP-binding protein D (1312 aa).

The N-terminal Ras-GEF domain occupies 26 to 155 (GFSAIKSCSL…EFFKAKKMAR (130 aa)). Low complexity-rich tracts occupy residues 206-236 (NTMNGINGTSNNNVNSNNNNNNGTTNISSPN) and 275-296 (NGTSPQSSPSSTLSSTNSLFNQ). Disordered stretches follow at residues 206–244 (NTMNGINGTSNNNVNSNNNNNNGTTNISSPNFDPSRSSM) and 260–326 (NFNN…NNVN). Over residues 297–310 (QPSLSMLNDDGSVQ) the composition is skewed to polar residues. Residues 311–326 (NNNNNNNNNNNNNNVN) show a composition bias toward low complexity. Residues 353-582 (LPEAIAKELT…FRLSKIREET (230 aa)) form the Ras-GEF domain. Residues 586–658 (QSLKESNGIG…NCGNGSGISS (73 aa)) form a disordered region. Residues 591–612 (SNGIGNSNSTSGGSSSSLVNKD) are compositionally biased toward low complexity. Residues 613–625 (GSGGGGGSGGGGS) show a composition bias toward gly residues. Positions 630–644 (GDGKGDGKDNRDGRG) are enriched in basic and acidic residues. Residues 646 to 657 (GNSNCGNGSGIS) are compositionally biased toward low complexity. 698 to 857 (VSSTLSEREW…ATFYKFIGVI (160 aa)) contributes to the a nucleoside 3',5'-cyclic phosphate binding site. In terms of domain architecture, GRAM spans 940–1006 (SSFRTKFGLS…DKILTVDKNI (67 aa)). Residues 1059 to 1087 (QQQQPSQQPSQQQSQSSQLQQSVSASSTT) are compositionally biased toward low complexity. 2 disordered regions span residues 1059–1108 (QQQQ…IKDL) and 1167–1210 (NNIN…NSSI). Residues 1105–1218 (IKDL…SNTS) and 1182–1303 (NNNN…LACV) contribute to the a nucleoside 3',5'-cyclic phosphate site.

Promotes the exchange of Ras-bound GDP by GTP. Induces the formation of substrate-attached pseudopodia, that leads to increased adhesion and thereby negatively influencing cell speed and polarity. The polypeptide is Cyclic GMP-binding protein D (gbpD) (Dictyostelium discoideum (Social amoeba)).